The sequence spans 429 residues: Ribosomal RNA small subunit methyltransferase B (429 aa).

Residues 254–260 (CAAPGGK), Asp277, Asp303, and Asp322 contribute to the S-adenosyl-L-methionine site. Cys375 functions as the Nucleophile in the catalytic mechanism.

It belongs to the class I-like SAM-binding methyltransferase superfamily. RsmB/NOP family.

Its subcellular location is the cytoplasm. It catalyses the reaction cytidine(967) in 16S rRNA + S-adenosyl-L-methionine = 5-methylcytidine(967) in 16S rRNA + S-adenosyl-L-homocysteine + H(+). In terms of biological role, specifically methylates the cytosine at position 967 (m5C967) of 16S rRNA. This Shigella boydii serotype 18 (strain CDC 3083-94 / BS512) protein is Ribosomal RNA small subunit methyltransferase B.